A 738-amino-acid chain; its full sequence is Flowering time control protein FCA (738 aa).

The disordered stretch occupies residues Met-1–Arg-118. Composition is skewed to gly residues over residues Arg-52 to Arg-70 and Ser-81 to Gly-98. Over residues Arg-109–Arg-118 the composition is skewed to basic and acidic residues. RRM domains lie at Val-122–Gly-203 and His-213–Pro-293. Disordered stretches follow at residues Asp-292–Leu-414 and Gln-566–Pro-594. Positions Ser-301–Gly-311 are enriched in gly residues. Positions His-342–Ser-358 are enriched in polar residues. A compositionally biased stretch (low complexity) spans Thr-368–Thr-377. 2 stretches are compositionally biased toward polar residues: residues Phe-383 to Met-401 and Pro-575 to Pro-594. One can recognise a WW domain in the interval Val-609–Glu-642. Positions Met-670–Ser-738 are disordered. The span at Pro-683–Gln-706 shows a compositional bias: low complexity. Positions Arg-723–Gln-732 are enriched in polar residues.

As to quaternary structure, interacts with FY. Binds to SF1, FIK, RPRD1B, Os09g0509000/LOC_Os09g33480 and MADS8. In terms of tissue distribution, mostly expressed in young flowers (panicles) and stems, and also present in young seedlings leaves and roots.

Its subcellular location is the nucleus. Its function is as follows. Plays a major role in the promotion of the transition of the vegetative meristem to reproductive development. Required for RNA-mediated chromatin silencing of a range of loci in the genome. Cotranscriptionally recognizes aberrant RNA and marks it for silencing. Controls alternative cleavage and polyadenylation on pre-mRNAs and antisense RNAs. Regulates flowering time, seed size and cell volume, probably via the modulation of cell size. This Oryza sativa subsp. japonica (Rice) protein is Flowering time control protein FCA.